The sequence spans 203 residues: MGRMDYLAMKTDDVDTVALVNSDMEELKVAAKKLFSDVSKLGGLGFGVSFLKFLASFAAIYLLILDRTNWKTKMLTSLLIPYIFLSLPSVIFNFLSGDVGKWIAFVAVVLRLFFPKHFPDWLEMPGSLILLLVVSPHFLAHHIRGTWIGTVISLFIGCYLLQEHIRASGGFRNSFTQPRGVSNTLGIILLLVYPVWALIVRVM.

Residues 1–43 (MGRMDYLAMKTDDVDTVALVNSDMEELKVAAKKLFSDVSKLGG) lie on the Extracellular side of the membrane. The helical transmembrane segment at 44–64 (LGFGVSFLKFLASFAAIYLLI) threads the bilayer. At 65–74 (LDRTNWKTKM) the chain is on the cytoplasmic side. The chain crosses the membrane as a helical span at residues 75–95 (LTSLLIPYIFLSLPSVIFNFL). Residues 96–98 (SGD) lie on the Extracellular side of the membrane. The chain crosses the membrane as a helical span at residues 99-119 (VGKWIAFVAVVLRLFFPKHFP). Aspartate 120 is a topological domain (cytoplasmic). A helical membrane pass occupies residues 121 to 141 (WLEMPGSLILLLVVSPHFLAH). At 142-144 (HIR) the chain is on the extracellular side. Residues 145 to 165 (GTWIGTVISLFIGCYLLQEHI) traverse the membrane as a helical segment. Over 166–179 (RASGGFRNSFTQPR) the chain is Cytoplasmic. The chain crosses the membrane as a helical span at residues 180–200 (GVSNTLGIILLLVYPVWALIV). The Extracellular portion of the chain corresponds to 201 to 203 (RVM).

The protein belongs to the Cold-regulated 413 protein family.

The protein resides in the cell membrane. The sequence is that of Cold-regulated 413 plasma membrane protein 2 (COR413PM2) from Arabidopsis thaliana (Mouse-ear cress).